The chain runs to 609 residues: Dihydroxy-acid dehydratase (609 aa).

Position 81 (D81) interacts with Mg(2+). Residue C122 participates in [2Fe-2S] cluster binding. 2 residues coordinate Mg(2+): D123 and K124. An N6-carboxylysine modification is found at K124. C195 contacts [2Fe-2S] cluster. Mg(2+) is bound at residue E491. Catalysis depends on S517, which acts as the Proton acceptor.

This sequence belongs to the IlvD/Edd family. In terms of assembly, homodimer. The cofactor is [2Fe-2S] cluster. Mg(2+) is required as a cofactor.

The enzyme catalyses (2R)-2,3-dihydroxy-3-methylbutanoate = 3-methyl-2-oxobutanoate + H2O. The catalysed reaction is (2R,3R)-2,3-dihydroxy-3-methylpentanoate = (S)-3-methyl-2-oxopentanoate + H2O. It participates in amino-acid biosynthesis; L-isoleucine biosynthesis; L-isoleucine from 2-oxobutanoate: step 3/4. It functions in the pathway amino-acid biosynthesis; L-valine biosynthesis; L-valine from pyruvate: step 3/4. Functionally, functions in the biosynthesis of branched-chain amino acids. Catalyzes the dehydration of (2R,3R)-2,3-dihydroxy-3-methylpentanoate (2,3-dihydroxy-3-methylvalerate) into 2-oxo-3-methylpentanoate (2-oxo-3-methylvalerate) and of (2R)-2,3-dihydroxy-3-methylbutanoate (2,3-dihydroxyisovalerate) into 2-oxo-3-methylbutanoate (2-oxoisovalerate), the penultimate precursor to L-isoleucine and L-valine, respectively. The chain is Dihydroxy-acid dehydratase from Acinetobacter baumannii (strain ACICU).